Reading from the N-terminus, the 353-residue chain is Phosphate acyltransferase (353 aa).

This sequence belongs to the PlsX family. In terms of assembly, homodimer. Probably interacts with PlsY.

It is found in the cytoplasm. It catalyses the reaction a fatty acyl-[ACP] + phosphate = an acyl phosphate + holo-[ACP]. The protein operates within lipid metabolism; phospholipid metabolism. Functionally, catalyzes the reversible formation of acyl-phosphate (acyl-PO(4)) from acyl-[acyl-carrier-protein] (acyl-ACP). This enzyme utilizes acyl-ACP as fatty acyl donor, but not acyl-CoA. The sequence is that of Phosphate acyltransferase from Bradyrhizobium diazoefficiens (strain JCM 10833 / BCRC 13528 / IAM 13628 / NBRC 14792 / USDA 110).